Here is a 626-residue protein sequence, read N- to C-terminus: MSSFDSAEGECNGLNQHYEKKVRPIIDLVDTLRALGVEKDLNLPAIAVIGDQSSGKSSVLEALSGVALPRGIGIVTRCPLILKLKKITRDKNWSGLLTYKDQTEILKEPTGIENAVLKAQIALAGTGEGISHEMITLEIQSCDVPDLTLIDLPGIARVATGNQPEDIEKQIKDLIEKFIKRQETISLVVVPANIDIATTEALKMASTVDPTGQRTLCILTKPDLVDRGMEDTVVRTVNNEVIRLEKGYMIVKCRGQQDINDKLNLVEALEKERRFFDEHPQFSSLLEDGKATIPLLGQRLTEELVEHIAKNVPRLQNQIEMKLQKTFERLKVLGESVPDDDEIELNNFLIKKLRQFMDALEEVKRVEEEPVKSDTRVFSKIRQEFVSWKHILDSKPIKMSTDLQEYVRTHRGKELPGFLNYGTFAGIIRMHVEDLEEPALKLLRNAKDIVHSSVGSIANIHFNGYPNLLLAVKEPIEKCLHEQFQNAEEKIRSQFKLEKTVYCQDDLYTNHLNLLRPKNTVRFGLEASLGNSELRETAFHLTSYLTIACERLANQIPLIVQYHMMNEYNSQLQNAMLGLIGTSDPGMLLCEDSGVARIRKDLKERLERLKDARRALPKVVHSANSW.

One can recognise a Dynamin-type G domain in the interval 40 to 313; that stretch reads DLNLPAIAVI…LVEHIAKNVP (274 aa). The segment at 50 to 57 is G1 motif; sequence GDQSSGKS. A GTP-binding site is contributed by 50–57; sequence GDQSSGKS. The G2 motif stretch occupies residues 75-77; sequence VTR. Positions 151–154 are G3 motif; the sequence is DLPG. GTP is bound by residues 151-155 and 220-223; these read DLPGI and TKPD. Residues 220–223 are G4 motif; sequence TKPD. The interval 252-255 is G5 motif; it reads KCRG. The GED domain occupies 534–624; it reads LRETAFHLTS…ALPKVVHSAN (91 aa).

Belongs to the TRAFAC class dynamin-like GTPase superfamily. Dynamin/Fzo/YdjA family.

The protein resides in the cytoplasm. The protein is Interferon-induced GTP-binding protein MxC (mxc) of Danio rerio (Zebrafish).